A 427-amino-acid polypeptide reads, in one-letter code: Serine hydroxymethyltransferase (427 aa).

(6S)-5,6,7,8-tetrahydrofolate is bound by residues Leu118 and 122–124 (GHL). Residue Lys227 is modified to N6-(pyridoxal phosphate)lysine. Residues Glu243 and 351-353 (SPF) each bind (6S)-5,6,7,8-tetrahydrofolate.

This sequence belongs to the SHMT family. In terms of assembly, homodimer. Requires pyridoxal 5'-phosphate as cofactor.

The protein resides in the cytoplasm. It carries out the reaction (6R)-5,10-methylene-5,6,7,8-tetrahydrofolate + glycine + H2O = (6S)-5,6,7,8-tetrahydrofolate + L-serine. It functions in the pathway one-carbon metabolism; tetrahydrofolate interconversion. Its pathway is amino-acid biosynthesis; glycine biosynthesis; glycine from L-serine: step 1/1. In terms of biological role, catalyzes the reversible interconversion of serine and glycine with tetrahydrofolate (THF) serving as the one-carbon carrier. This reaction serves as the major source of one-carbon groups required for the biosynthesis of purines, thymidylate, methionine, and other important biomolecules. Also exhibits THF-independent aldolase activity toward beta-hydroxyamino acids, producing glycine and aldehydes, via a retro-aldol mechanism. The chain is Serine hydroxymethyltransferase from Thermotoga neapolitana (strain ATCC 49049 / DSM 4359 / NBRC 107923 / NS-E).